Reading from the N-terminus, the 226-residue chain is Large ribosomal subunit protein uL3 (226 aa).

Gln-160 is subject to N5-methylglutamine.

Belongs to the universal ribosomal protein uL3 family. Part of the 50S ribosomal subunit. Forms a cluster with proteins L14 and L19. Post-translationally, methylated by PrmB.

Its function is as follows. One of the primary rRNA binding proteins, it binds directly near the 3'-end of the 23S rRNA, where it nucleates assembly of the 50S subunit. The protein is Large ribosomal subunit protein uL3 of Leptothrix cholodnii (strain ATCC 51168 / LMG 8142 / SP-6) (Leptothrix discophora (strain SP-6)).